The chain runs to 75 residues: M-myrmeciitoxin-Mp2a (75 aa).

An N-terminal signal peptide occupies residues 1-26 (MKLSCLLLTLAIIFVLTIVHAPNVEA). A propeptide spanning residues 27 to 48 (KALADPESDAVGFADAVGEADP) is cleaved from the precursor. Residue Leu-74 is modified to Leucine amide.

This sequence belongs to the formicidae venom precursor-01 superfamily. Ant pilosulin family. Heterodimer with M-MIITX-Mp2b (pilosin-3b) (AC P0C023); disulfide-linked. Only heterodimers (and not monomers) have been identified in the venom. As to expression, expressed by the venom gland.

It localises to the secreted. Its function is as follows. Heterodimer protein that may serve both defensive (pain-inducing) and predatory (insecticidal) roles. Has membrane-disrupting activity and shows induction of non-specific calcium influx into cells,. Shows broad-spectrum activity against a diverse range of bacteria, and cell lines, as well as hemolytic activity (EC(50)=2.18 uM). In vivo, shows moderate insecticidal activity against D.melanogaster and potent anthelmintic activity against the veterinary nematode H.contortus. In addition, intraplantar injection into mice induces nocifensive behavior and mechanical allodynia. The protein is M-myrmeciitoxin-Mp2a of Myrmecia pilosula (Jack jumper ant).